The chain runs to 436 residues: GTPase Der (436 aa).

2 consecutive EngA-type G domains span residues Pro-3–Ser-168 and Ile-177–Ser-352. Residues Gly-9–Ser-16, Asp-56–Tyr-60, Asn-120–Glu-123, Gly-183–Ser-190, Asp-230–Leu-234, and Asn-295–Asp-298 each bind GTP. The 84-residue stretch at Gln-353–Lys-436 folds into the KH-like domain.

This sequence belongs to the TRAFAC class TrmE-Era-EngA-EngB-Septin-like GTPase superfamily. EngA (Der) GTPase family. As to quaternary structure, associates with the 50S ribosomal subunit.

Functionally, GTPase that plays an essential role in the late steps of ribosome biogenesis. The polypeptide is GTPase Der (Prosthecochloris aestuarii (strain DSM 271 / SK 413)).